The sequence spans 520 residues: Glutamate--cysteine ligase (520 aa).

The protein belongs to the glutamate--cysteine ligase type 1 family. Type 1 subfamily.

The enzyme catalyses L-cysteine + L-glutamate + ATP = gamma-L-glutamyl-L-cysteine + ADP + phosphate + H(+). The protein operates within sulfur metabolism; glutathione biosynthesis; glutathione from L-cysteine and L-glutamate: step 1/2. The sequence is that of Glutamate--cysteine ligase from Leptospira interrogans serogroup Icterohaemorrhagiae serovar copenhageni (strain Fiocruz L1-130).